Here is a 423-residue protein sequence, read N- to C-terminus: Putative protein phosphatase 2C 50 (423 aa).

The region spanning 52 to 380 (IFAFPFPTGT…DNMAAVVVPL (329 aa)) is the PPM-type phosphatase domain. Mn(2+)-binding residues include aspartate 74, glycine 75, aspartate 320, and aspartate 371.

Belongs to the PP2C family. Requires Mg(2+) as cofactor. The cofactor is Mn(2+).

It carries out the reaction O-phospho-L-seryl-[protein] + H2O = L-seryl-[protein] + phosphate. The catalysed reaction is O-phospho-L-threonyl-[protein] + H2O = L-threonyl-[protein] + phosphate. This chain is Putative protein phosphatase 2C 50, found in Arabidopsis thaliana (Mouse-ear cress).